A 403-amino-acid polypeptide reads, in one-letter code: 3-hydroxy-3-methylglutaryl-coenzyme A reductase (403 aa).

Residues Glu99 and Asp303 each act as charge relay system in the active site. The active-site Proton donor is the His398.

It belongs to the HMG-CoA reductase family.

It catalyses the reaction (R)-mevalonate + 2 NADP(+) + CoA = (3S)-3-hydroxy-3-methylglutaryl-CoA + 2 NADPH + 2 H(+). It participates in metabolic intermediate biosynthesis; (R)-mevalonate biosynthesis; (R)-mevalonate from acetyl-CoA: step 3/3. Its activity is regulated as follows. Is competitively inhibited by (R)-HMG-CoA and lovastatin (formerly called mevinolin). Its function is as follows. Catalyzes the NADPH-dependent reductive deacylation of (S)-3-hydroxy-3-methylglutaryl-CoA (HMG-CoA) to (R)-mevalonate. Functions in the mevalonate (MVA) pathway leading to isopentenyl diphosphate (IPP), a key precursor for the biosynthesis of isoprenoid compounds such as archaeal membrane lipids. Is also able to catalyze the reduction of mevaldehyde to mevalonate and the oxidative acylation of mevaldehyde to HMG-CoA. The polypeptide is 3-hydroxy-3-methylglutaryl-coenzyme A reductase (hmgA) (Haloferax volcanii (strain ATCC 29605 / DSM 3757 / JCM 8879 / NBRC 14742 / NCIMB 2012 / VKM B-1768 / DS2) (Halobacterium volcanii)).